Consider the following 419-residue polypeptide: Metacaspase-1 (419 aa).

The segment at 1 to 109 is disordered; sequence MSGYPGYNNG…PPQGMHAFGQ (109 aa). Pro residues-rich tracts occupy residues 18 to 37 and 45 to 61; these read QYPP…PPPQ and QPPP…PPPQ. Over residues 83-95 the composition is skewed to polar residues; that stretch reads SVNSNAYTNGNQN. Residues histidine 210 and cysteine 266 contribute to the active site.

The protein belongs to the peptidase C14B family.

Its function is as follows. Involved in cell death (apoptosis). The sequence is that of Metacaspase-1 (casA) from Botryotinia fuckeliana (strain B05.10) (Noble rot fungus).